The following is an 80-amino-acid chain: Waprin-Phi3 (80 aa).

Positions 1–22 (MKPWILLLLAGLLILSTQLTTA) are cleaved as a signal peptide. A WAP domain is found at 31 to 78 (PKVKPGECPKVKIPPDYPCNQYCVWDFDCEGNKKCCPVGCAKECFPPG). 4 cysteine pairs are disulfide-bonded: C38/C66, C49/C70, C53/C65, and C59/C74.

Belongs to the venom waprin family. In terms of tissue distribution, expressed by the venom gland.

The protein resides in the secreted. Its function is as follows. Damages membranes of susceptible bacteria. Has no hemolytic activity. Not toxic to mice. Does not inhibit the proteinases elastase and cathepsin G. The chain is Waprin-Phi3 from Philodryas olfersii (Green snake).